The following is a 177-amino-acid chain: Large ribosomal subunit protein bL31m (177 aa).

Residues 1–14 constitute a mitochondrion transit peptide; that stretch reads MLKSIFAKRFASTG. Positions 36 to 118 are sufficient for general mitochondrial translation; it reads KSRPAIYHQF…FSVDSTTPNS (83 aa). Residues 87–177 are sufficient for dosage suppression of COX2 mutation; that stretch reads LVVVDANSGG…KLASKKRDKK (91 aa). The span at 111–123 shows a compositional bias: polar residues; that stretch reads VDSTTPNSSSETV. Residues 111-144 form a disordered region; that stretch reads VDSTTPNSSSETVELSEENKKKTQIKKEEKEDVS. Basic and acidic residues predominate over residues 127-144; that stretch reads EENKKKTQIKKEEKEDVS.

It belongs to the bacterial ribosomal protein bL31 family. Highly divergent. In terms of assembly, component of the mitochondrial large ribosomal subunit (mt-LSU). Mature yeast 74S mitochondrial ribosomes consist of a small (37S) and a large (54S) subunit. The 37S small subunit contains a 15S ribosomal RNA (15S mt-rRNA) and 34 different proteins. The 54S large subunit contains a 21S rRNA (21S mt-rRNA) and 46 different proteins.

It is found in the mitochondrion. Functionally, component of the mitochondrial ribosome (mitoribosome), a dedicated translation machinery responsible for the synthesis of mitochondrial genome-encoded proteins, including at least some of the essential transmembrane subunits of the mitochondrial respiratory chain. The mitoribosomes are attached to the mitochondrial inner membrane and translation products are cotranslationally integrated into the membrane. Overexpression of bL31m suppresses mutations in the COX2 leader peptide-encoding and initiation codon regions. In Saccharomyces cerevisiae (strain ATCC 204508 / S288c) (Baker's yeast), this protein is Large ribosomal subunit protein bL31m (MRPL36).